Reading from the N-terminus, the 204-residue chain is uncharacterized protein (204 aa).

This is an uncharacterized protein from Stylonychia lemnae (Ciliate).